Reading from the N-terminus, the 350-residue chain is Protein-glutamate methylesterase/protein-glutamine glutaminase 1 (350 aa).

The region spanning 3–121 (KVLIVEDSPV…RDYDIRARDL (119 aa)) is the Response regulatory domain. Position 54 is a 4-aspartylphosphate (D54). In terms of domain architecture, CheB-type methylesterase spans 148–342 (PASGEPDIGK…PPEKIARVLV (195 aa)). Catalysis depends on residues S170, H197, and D290.

This sequence belongs to the CheB family. Post-translationally, phosphorylated by CheA. Phosphorylation of the N-terminal regulatory domain activates the methylesterase activity.

The protein localises to the cytoplasm. The enzyme catalyses [protein]-L-glutamate 5-O-methyl ester + H2O = L-glutamyl-[protein] + methanol + H(+). The catalysed reaction is L-glutaminyl-[protein] + H2O = L-glutamyl-[protein] + NH4(+). Its function is as follows. Involved in chemotaxis. Part of a chemotaxis signal transduction system that modulates chemotaxis in response to various stimuli. Catalyzes the demethylation of specific methylglutamate residues introduced into the chemoreceptors (methyl-accepting chemotaxis proteins or MCP) by CheR. Also mediates the irreversible deamidation of specific glutamine residues to glutamic acid. The protein is Protein-glutamate methylesterase/protein-glutamine glutaminase 1 of Syntrophus aciditrophicus (strain SB).